The chain runs to 506 residues: Anaerobic nitric oxide reductase transcription regulator NorR (506 aa).

Asp-57 bears the 4-aspartylphosphate mark. The Sigma-54 factor interaction domain occupies 187–416 (MIGLSPNMMQ…LEHAIHRAVV (230 aa)). ATP-binding positions include 215-222 (GETGTGKE) and 278-287 (ADNGTLFLDE). Residues 481–500 (WAACARALETDVANLHRLAK) constitute a DNA-binding region (H-T-H motif).

It participates in nitrogen metabolism; nitric oxide reduction. Functionally, required for the expression of anaerobic nitric oxide (NO) reductase, acts as a transcriptional activator for at least the norVW operon. Activation also requires sigma-54. This is Anaerobic nitric oxide reductase transcription regulator NorR from Citrobacter koseri (strain ATCC BAA-895 / CDC 4225-83 / SGSC4696).